Consider the following 277-residue polypeptide: Large ribosomal subunit protein uL2 (277 aa).

2 disordered regions span residues 37 to 60 (KNSTAGRNNNGHITTRHKGGGHKH) and 223 to 265 (VVMN…KRTD). The segment covering 39-49 (STAGRNNNGHI) has biased composition (polar residues). Residues 50-60 (TTRHKGGGHKH) are compositionally biased toward basic residues. Over residues 229–244 (DHPHGGGEGRTGEARE) the composition is skewed to basic and acidic residues.

This sequence belongs to the universal ribosomal protein uL2 family. Part of the 50S ribosomal subunit. Forms a bridge to the 30S subunit in the 70S ribosome.

In terms of biological role, one of the primary rRNA binding proteins. Required for association of the 30S and 50S subunits to form the 70S ribosome, for tRNA binding and peptide bond formation. It has been suggested to have peptidyltransferase activity; this is somewhat controversial. Makes several contacts with the 16S rRNA in the 70S ribosome. The chain is Large ribosomal subunit protein uL2 from Neisseria meningitidis serogroup A / serotype 4A (strain DSM 15465 / Z2491).